A 447-amino-acid polypeptide reads, in one-letter code: Gamma-glutamyl phosphate reductase (447 aa).

Belongs to the gamma-glutamyl phosphate reductase family.

The protein resides in the cytoplasm. The enzyme catalyses L-glutamate 5-semialdehyde + phosphate + NADP(+) = L-glutamyl 5-phosphate + NADPH + H(+). Its pathway is amino-acid biosynthesis; L-proline biosynthesis; L-glutamate 5-semialdehyde from L-glutamate: step 2/2. Catalyzes the NADPH-dependent reduction of L-glutamate 5-phosphate into L-glutamate 5-semialdehyde and phosphate. The product spontaneously undergoes cyclization to form 1-pyrroline-5-carboxylate. The polypeptide is Gamma-glutamyl phosphate reductase (Methanosarcina barkeri (strain Fusaro / DSM 804)).